A 56-amino-acid polypeptide reads, in one-letter code: Large ribosomal subunit protein bL33B (56 aa).

This sequence belongs to the bacterial ribosomal protein bL33 family.

This is Large ribosomal subunit protein bL33B from Cutibacterium acnes (strain DSM 16379 / KPA171202) (Propionibacterium acnes).